The following is a 257-amino-acid chain: Exosome complex component Rrp4 (257 aa).

One can recognise an S1 motif domain in the interval 65 to 137 (GDNVLGKIVD…EVNQIDLTTK (73 aa)). One can recognise a KH domain in the interval 147-206 (RGGQLVTITPSKVPRLIGKGGSMINMIKTLTGTRIIVGQNGWVWVSGKNDELERLAIEAI).

It belongs to the RRP4 family. As to quaternary structure, component of the archaeal exosome complex. Forms a trimer of Rrp4 and/or Csl4 subunits. The trimer associates with a hexameric ring-like arrangement composed of 3 Rrp41-Rrp42 heterodimers.

The protein localises to the cytoplasm. In terms of biological role, non-catalytic component of the exosome, which is a complex involved in RNA degradation. Increases the RNA binding and the efficiency of RNA degradation. Confers strong poly(A) specificity to the exosome. This chain is Exosome complex component Rrp4, found in Thermococcus kodakarensis (strain ATCC BAA-918 / JCM 12380 / KOD1) (Pyrococcus kodakaraensis (strain KOD1)).